The chain runs to 210 residues: MMSQVSHSQEGSGRFWNKFKSSTKSLSTSLAHLSIKAEKDGDTVNTTLVHKGLVKFYENQHPFQGFPGWLGEKEDLPNERKILDTQVKHDMKKQNSRHFSPSFSNRRKASSEDPMGTPSSNGNTPEYTPASKSFQDIYNNHTSSSSATPRRASSRPTRPSAGQEFRASLGRSKTSNSFNTSSTPTPPPDASSGVMAMKDRLKRRNNDYGF.

At Met-1 the chain carries N-acetylmethionine. Met-2 carries the N-acetylserine modification. A disordered region spans residues 88–210 (KHDMKKQNSR…LKRRNNDYGF (123 aa)). At Ser-102 the chain carries Phosphoserine. Polar residues predominate over residues 117 to 141 (TPSSNGNTPEYTPASKSFQDIYNNH). 2 stretches are compositionally biased toward low complexity: residues 142–161 (TSSSSATPRRASSRPTRPSA) and 172–183 (SKTSNSFNTSST).

Interacts physically with SEC1.

Its function is as follows. Involved in secretion. Component of the secretory vesicle docking complex. The protein is Protein MSO1 (MSO1) of Saccharomyces cerevisiae (strain ATCC 204508 / S288c) (Baker's yeast).